The sequence spans 720 residues: Long chain acyl-CoA synthetase 8 (720 aa).

At M1 the chain carries N-acetylmethionine. I279–K290 serves as a coordination point for ATP. Positions D554–K582 are fatty acid-binding.

The protein belongs to the ATP-dependent AMP-binding enzyme family. Mg(2+) is required as a cofactor.

It carries out the reaction a long-chain fatty acid + ATP + CoA = a long-chain fatty acyl-CoA + AMP + diphosphate. It functions in the pathway lipid metabolism; fatty acid metabolism. Its function is as follows. Activation of long-chain fatty acids for both synthesis of cellular lipids, and degradation via beta-oxidation. Preferentially uses palmitate, palmitoleate, oleate and linoleate. This chain is Long chain acyl-CoA synthetase 8 (LACS8), found in Arabidopsis thaliana (Mouse-ear cress).